The chain runs to 281 residues: UPF0500 protein C1orf216 homolog (281 aa).

The span at 1–12 (MFTIQKPDTVSH) shows a compositional bias: polar residues. The segment at 1–197 (MFTIQKPDTV…SSSDSDSISV (197 aa)) is disordered. The span at 45–74 (TYDKNENWSQDKKGGEEGENKSKSEDEHSS) shows a compositional bias: basic and acidic residues. Composition is skewed to low complexity over residues 92 to 102 (STGSEGISLSS), 147 to 161 (SSSL…VSAS), and 169 to 178 (PAPTTTPQEN). Positions 179–190 (PETEDSDVESSS) are enriched in acidic residues. A coiled-coil region spans residues 198–257 (TLSEAFQSLQDKEKLKEREKEKHHAQLTMYRRLALLRWIRALQQKVRDQQNRLQESFDTI).

Belongs to the UPF0500 family.

The chain is UPF0500 protein C1orf216 homolog from Xenopus laevis (African clawed frog).